Consider the following 293-residue polypeptide: Microtubule-associated protein RP/EB family member 1B (293 aa).

Residues 13-115 (FVGRNEILSW…FLQWLKRFCD (103 aa)) form the Calponin-homology (CH) domain. Disordered regions lie at residues 124–188 (ENYN…SAEV) and 262–293 (LGLE…ETQT). A compositionally biased stretch (basic and acidic residues) spans 129–141 (VERRSRGGREKSV). Residues 151-166 (LQTNNMHHPPVATSNK) show a composition bias toward polar residues. An EB1 C-terminal domain is found at 180-250 (GGSNSSAEVQ…LYATDANESV (71 aa)). Acidic residues predominate over residues 266 to 285 (GYEEEGKEEEEEEEEEEEEA).

Belongs to the MAPRE family. As to quaternary structure, homodimer and heterodimer with EB1A. Highly expressed in guard cells of leaf stomata, pollen grains and pollen tubes. Expressed in young roots.

It is found in the cytoplasm. The protein localises to the cytoskeleton. Its subcellular location is the spindle pole. It localises to the phragmoplast. Functionally, binds to the plus end of microtubules and regulates the dynamics of the microtubule cytoskeleton. May be involved in anchoring microtubules to their nucleation sites and/or functioning as a reservoir for distribution to the growing end. In plants, microtubule minus ends are not necessarily severed from the nucleation site and transported to the plus end of a microtubule as part of the recycling process. May play a role in endomembrane organization during polarized growth of plant cells. The chain is Microtubule-associated protein RP/EB family member 1B (EB1B) from Arabidopsis thaliana (Mouse-ear cress).